Consider the following 353-residue polypeptide: UPF0283 membrane protein Spro_2618 (353 aa).

The next 3 helical transmembrane spans lie at Met-71–Val-91, Ile-101–Val-121, and Glu-214–Trp-234.

The protein belongs to the UPF0283 family.

The protein localises to the cell inner membrane. This is UPF0283 membrane protein Spro_2618 from Serratia proteamaculans (strain 568).